The chain runs to 666 residues: MRKINLLDLETTNKIAAGEVIERPFSVVKELVENSIDAGAKNITIEIEDGGQKLIKIIDDGEGIYPIDIKNAFLPHATSKINSIEDIYKISTMGFRGEALASISSVSKTKLKSRVDSYNFGKEIYIEGGKIEYLKDTGCNVGTTIEVSDLFYNVPARLKFLKSARSDSSAISDIVNRFILAHPDISFNLINKGKQSIKSYGTGNLKDSIRCVYNKTISENLINFENHKDIISVYGFIGKPEISRKSRTNQSIFVNKRYVKSKFITAAVENAFKSFLTVNSYPFFVIFIDIFPEYIDVNVHPTKSEVKFKDERAMFKTIFDAVHEAIKGELKESFTNFFNKEDINIYDSEKSIAETIKPGKEEVQIPIDLNSNNKIDIFGNNINKLPNNTELLKNIDIKEKNILENNDNFYTSNQNEIYYTNKNDKCLNSCNKDDYSKIEKPLQKDNKNLDNLYLNEHNTNSSSINIKENKPNNFYVDMKIIGQFNNTYILIEKDKELYIIDQHAAHEKVLFEKFKSEIEKGYVVSQILLSPVVIELSEDEFNIYEENKDIFKNSGFSVEAFGECTINIKEVPLILGKPNVENLFMDILYNLKNMKSKETSTIKYNAIATLACKSAVKANDNLKEEEIKKLIEDMLILNNPYTCPHGRPTMIKFTLKDLEKKFKRIQ.

It belongs to the DNA mismatch repair MutL/HexB family.

Functionally, this protein is involved in the repair of mismatches in DNA. It is required for dam-dependent methyl-directed DNA mismatch repair. May act as a 'molecular matchmaker', a protein that promotes the formation of a stable complex between two or more DNA-binding proteins in an ATP-dependent manner without itself being part of a final effector complex. This Clostridium botulinum (strain 657 / Type Ba4) protein is DNA mismatch repair protein MutL.